We begin with the raw amino-acid sequence, 164 residues long: Transcriptional repressor NrdR (164 aa).

A zinc finger spans residues 3–34 (CPKCNYNKSSVVDSRQAEDGNTIRRRRECESC). Positions 49–139 (LLVIKKDGTR…VYKSFKDLDE (91 aa)) constitute an ATP-cone domain.

Belongs to the NrdR family. It depends on Zn(2+) as a cofactor.

Its function is as follows. Negatively regulates transcription of bacterial ribonucleotide reductase nrd genes and operons by binding to NrdR-boxes. In Streptococcus equi subsp. zooepidemicus (strain H70), this protein is Transcriptional repressor NrdR.